Consider the following 299-residue polypeptide: 4-hydroxy-3-methylbut-2-enyl diphosphate reductase (299 aa).

Cys12 contacts [4Fe-4S] cluster. Residues His42 and His88 each contribute to the (2E)-4-hydroxy-3-methylbut-2-enyl diphosphate site. Dimethylallyl diphosphate contacts are provided by His42 and His88. Isopentenyl diphosphate contacts are provided by His42 and His88. Cys110 contributes to the [4Fe-4S] cluster binding site. His138 serves as a coordination point for (2E)-4-hydroxy-3-methylbut-2-enyl diphosphate. His138 contributes to the dimethylallyl diphosphate binding site. His138 contacts isopentenyl diphosphate. Residue Glu140 is the Proton donor of the active site. Thr177 serves as a coordination point for (2E)-4-hydroxy-3-methylbut-2-enyl diphosphate. Cys205 is a [4Fe-4S] cluster binding site. Residues Ser233, Asn235, and Ser277 each coordinate (2E)-4-hydroxy-3-methylbut-2-enyl diphosphate. Dimethylallyl diphosphate-binding residues include Ser233, Asn235, and Ser277. Residues Ser233, Asn235, and Ser277 each coordinate isopentenyl diphosphate.

Belongs to the IspH family. [4Fe-4S] cluster is required as a cofactor.

The catalysed reaction is isopentenyl diphosphate + 2 oxidized [2Fe-2S]-[ferredoxin] + H2O = (2E)-4-hydroxy-3-methylbut-2-enyl diphosphate + 2 reduced [2Fe-2S]-[ferredoxin] + 2 H(+). The enzyme catalyses dimethylallyl diphosphate + 2 oxidized [2Fe-2S]-[ferredoxin] + H2O = (2E)-4-hydroxy-3-methylbut-2-enyl diphosphate + 2 reduced [2Fe-2S]-[ferredoxin] + 2 H(+). It functions in the pathway isoprenoid biosynthesis; dimethylallyl diphosphate biosynthesis; dimethylallyl diphosphate from (2E)-4-hydroxy-3-methylbutenyl diphosphate: step 1/1. The protein operates within isoprenoid biosynthesis; isopentenyl diphosphate biosynthesis via DXP pathway; isopentenyl diphosphate from 1-deoxy-D-xylulose 5-phosphate: step 6/6. In terms of biological role, catalyzes the conversion of 1-hydroxy-2-methyl-2-(E)-butenyl 4-diphosphate (HMBPP) into a mixture of isopentenyl diphosphate (IPP) and dimethylallyl diphosphate (DMAPP). Acts in the terminal step of the DOXP/MEP pathway for isoprenoid precursor biosynthesis. The polypeptide is 4-hydroxy-3-methylbut-2-enyl diphosphate reductase (Malacoplasma penetrans (strain HF-2) (Mycoplasma penetrans)).